The following is a 229-amino-acid chain: Ras-related protein Rab-33B (229 aa).

Residues asparagine 43, valine 44, glycine 45, lysine 46, threonine 47, cysteine 48, threonine 62, and threonine 65 each contribute to the GTP site. Residue threonine 47 participates in Mg(2+) binding. Positions 56-68 match the Switch 1 motif; sequence GRFPDRTEATIGV. Positions 65 and 88 each coordinate Mg(2+). Residues 89 to 108 carry the Switch 2 motif; sequence TAGQERFRKSMVQHYYRNVH. GTP is bound by residues glycine 91, asparagine 148, lysine 149, aspartate 151, alanine 179, and lysine 180. S-geranylgeranyl cysteine attachment occurs at residues cysteine 227 and cysteine 229. Cysteine 229 carries the cysteine methyl ester modification.

Belongs to the small GTPase superfamily. Rab family. In terms of assembly, interacts (GTP- and GDP-bound forms) with ATG16L1; the complex consists of a tetramer where two RAB33B molecules bind independently one molecule of the ATG16L1 homodimer; the interaction promotes ATG12-ATG5-ATG16L1 complex recruitment to phagophores. Interacts with ATG16L2; however interaction is approximately hundred times lower than for ATG16L1. Interacts with RIC1 (via C-terminus domain); the interaction is direct with a preference for RAB33B-GTP. Interacts with RGP1. The cofactor is Mg(2+). Prenylated.

It is found in the golgi apparatus membrane. Its subcellular location is the golgi apparatus. The protein localises to the cis-Golgi network. The protein resides in the preautophagosomal structure membrane. It catalyses the reaction GTP + H2O = GDP + phosphate + H(+). With respect to regulation, regulated by guanine nucleotide exchange factors (GEFs) which promote the exchange of bound GDP for free GTP. Regulated by GTPase activating proteins (GAPs) such as SGSM2 which increase the GTP hydrolysis activity. Inhibited by GDP dissociation inhibitors (GDIs). Functionally, the small GTPases Rab are key regulators of intracellular membrane trafficking, from the formation of transport vesicles to their fusion with membranes. Rabs cycle between an inactive GDP-bound form and an active GTP-bound form that is able to recruit to membranes different sets of downstream effectors directly responsible for vesicle formation, movement, tethering and fusion. RAB33B acts, in coordination with RAB6A, to regulate intra-Golgi retrograde trafficking. Participates in autophagosome formation by recruiting the ATG12-ATG5-ATG16L1 complex to phagophores, probably in a nucleotide-independent manner. The polypeptide is Ras-related protein Rab-33B (RAB33B) (Pongo abelii (Sumatran orangutan)).